We begin with the raw amino-acid sequence, 145 residues long: MRTTPMANASTIERKWLVVDAAGKTLGRLSTEVASILRGKHKPTYTPHVDTGDHVIIINAEKIELTGKKLTDKIYYRHTQHPGGLKSRTALEMRTNYPEKMLELAIKGMLPKGSLGRQMFKKLNVYRGSEHPHEAQKPEVYELRG.

It belongs to the universal ribosomal protein uL13 family. As to quaternary structure, part of the 50S ribosomal subunit.

Functionally, this protein is one of the early assembly proteins of the 50S ribosomal subunit, although it is not seen to bind rRNA by itself. It is important during the early stages of 50S assembly. The chain is Large ribosomal subunit protein uL13 from Bacillus velezensis (strain DSM 23117 / BGSC 10A6 / LMG 26770 / FZB42) (Bacillus amyloliquefaciens subsp. plantarum).